We begin with the raw amino-acid sequence, 425 residues long: Serine--tRNA ligase (425 aa).

230–232 (TAE) provides a ligand contact to L-serine. 261 to 263 (RSE) is a binding site for ATP. Glutamate 284 lines the L-serine pocket. Position 348-351 (348-351 (EISS)) interacts with ATP. Serine 384 contributes to the L-serine binding site.

The protein belongs to the class-II aminoacyl-tRNA synthetase family. Type-1 seryl-tRNA synthetase subfamily. Homodimer. The tRNA molecule binds across the dimer.

Its subcellular location is the cytoplasm. The catalysed reaction is tRNA(Ser) + L-serine + ATP = L-seryl-tRNA(Ser) + AMP + diphosphate + H(+). It catalyses the reaction tRNA(Sec) + L-serine + ATP = L-seryl-tRNA(Sec) + AMP + diphosphate + H(+). Its pathway is aminoacyl-tRNA biosynthesis; selenocysteinyl-tRNA(Sec) biosynthesis; L-seryl-tRNA(Sec) from L-serine and tRNA(Sec): step 1/1. Catalyzes the attachment of serine to tRNA(Ser). Is also able to aminoacylate tRNA(Sec) with serine, to form the misacylated tRNA L-seryl-tRNA(Sec), which will be further converted into selenocysteinyl-tRNA(Sec). This is Serine--tRNA ligase from Streptococcus pyogenes serotype M28 (strain MGAS6180).